A 316-amino-acid chain; its full sequence is Bifunctional protein FolD (316 aa).

Residues 165–167 (GKS) and Ile231 each bind NADP(+).

The protein belongs to the tetrahydrofolate dehydrogenase/cyclohydrolase family. As to quaternary structure, homodimer.

It carries out the reaction (6R)-5,10-methylene-5,6,7,8-tetrahydrofolate + NADP(+) = (6R)-5,10-methenyltetrahydrofolate + NADPH. It catalyses the reaction (6R)-5,10-methenyltetrahydrofolate + H2O = (6R)-10-formyltetrahydrofolate + H(+). Its pathway is one-carbon metabolism; tetrahydrofolate interconversion. Catalyzes the oxidation of 5,10-methylenetetrahydrofolate to 5,10-methenyltetrahydrofolate and then the hydrolysis of 5,10-methenyltetrahydrofolate to 10-formyltetrahydrofolate. This is Bifunctional protein FolD from Sphingobium chlorophenolicum.